A 315-amino-acid polypeptide reads, in one-letter code: Methionyl-tRNA formyltransferase (315 aa).

Residues 2 to 189 form an N-terminal domain region; the sequence is SESLRIIFAG…LITTLKQLAD (188 aa). 113 to 116 lines the (6S)-5,6,7,8-tetrahydrofolate pocket; the sequence is SLLP. The interval 210 to 315 is C-terminal domain; the sequence is KEEARIDWSL…EWFVPGNRLV (106 aa).

Belongs to the Fmt family. Monomer.

The catalysed reaction is L-methionyl-tRNA(fMet) + (6R)-10-formyltetrahydrofolate = N-formyl-L-methionyl-tRNA(fMet) + (6S)-5,6,7,8-tetrahydrofolate + H(+). Its activity is regulated as follows. Activity is optimum in the presence of Mg(2+) and K(+). Attaches a formyl group to the free amino group of methionyl-tRNA(fMet). The formyl group appears to play a dual role in the initiator identity of N-formylmethionyl-tRNA by promoting its recognition by IF2 and preventing the misappropriation of this tRNA by the elongation apparatus. This Escherichia coli (strain K12) protein is Methionyl-tRNA formyltransferase.